The primary structure comprises 162 residues: Protein NrdI (162 aa).

The protein belongs to the NrdI family.

In terms of biological role, probably involved in ribonucleotide reductase function. This is Protein NrdI from Streptococcus pyogenes serotype M2 (strain MGAS10270).